Reading from the N-terminus, the 317-residue chain is Acetyl-coenzyme A carboxylase carboxyl transferase subunit alpha (317 aa).

Residues Leu40–Ser293 form the CoA carboxyltransferase C-terminal domain.

Belongs to the AccA family. Acetyl-CoA carboxylase is a heterohexamer composed of biotin carboxyl carrier protein (AccB), biotin carboxylase (AccC) and two subunits each of ACCase subunit alpha (AccA) and ACCase subunit beta (AccD).

It is found in the cytoplasm. It carries out the reaction N(6)-carboxybiotinyl-L-lysyl-[protein] + acetyl-CoA = N(6)-biotinyl-L-lysyl-[protein] + malonyl-CoA. It functions in the pathway lipid metabolism; malonyl-CoA biosynthesis; malonyl-CoA from acetyl-CoA: step 1/1. Component of the acetyl coenzyme A carboxylase (ACC) complex. First, biotin carboxylase catalyzes the carboxylation of biotin on its carrier protein (BCCP) and then the CO(2) group is transferred by the carboxyltransferase to acetyl-CoA to form malonyl-CoA. This is Acetyl-coenzyme A carboxylase carboxyl transferase subunit alpha from Brucella anthropi (strain ATCC 49188 / DSM 6882 / CCUG 24695 / JCM 21032 / LMG 3331 / NBRC 15819 / NCTC 12168 / Alc 37) (Ochrobactrum anthropi).